A 1209-amino-acid polypeptide reads, in one-letter code: ATP-dependent helicase/nuclease subunit A (1209 aa).

The 474-residue stretch at 9–482 (SQWTDEQWQA…IDLAKNFRSR (474 aa)) folds into the UvrD-like helicase ATP-binding domain. 30–37 (AAAGSGKT) provides a ligand contact to ATP. Residues 510 to 798 (AALRFGAQDY…RMMTIHKSKG (289 aa)) enclose the UvrD-like helicase C-terminal domain.

The protein belongs to the helicase family. AddA subfamily. As to quaternary structure, heterodimer of AddA and AddB/RexB. It depends on Mg(2+) as a cofactor.

The catalysed reaction is Couples ATP hydrolysis with the unwinding of duplex DNA by translocating in the 3'-5' direction.. It catalyses the reaction ATP + H2O = ADP + phosphate + H(+). The heterodimer acts as both an ATP-dependent DNA helicase and an ATP-dependent, dual-direction single-stranded exonuclease. Recognizes the chi site generating a DNA molecule suitable for the initiation of homologous recombination. The AddA nuclease domain is required for chi fragment generation; this subunit has the helicase and 3' -&gt; 5' nuclease activities. In Anoxybacillus flavithermus (strain DSM 21510 / WK1), this protein is ATP-dependent helicase/nuclease subunit A.